We begin with the raw amino-acid sequence, 451 residues long: tRNA modification GTPase MnmE (451 aa).

Positions 25, 87, and 127 each coordinate (6S)-5-formyl-5,6,7,8-tetrahydrofolate. Positions 222–374 (GLRVALVGRP…FVQVLLERCG (153 aa)) constitute a TrmE-type G domain. Asparagine 232 provides a ligand contact to K(+). GTP contacts are provided by residues 232–237 (NVGKSS), 251–257 (TELPGTT), and 276–279 (DTAG). Residue serine 236 coordinates Mg(2+). Residues threonine 251, leucine 253, and threonine 256 each coordinate K(+). Threonine 257 serves as a coordination point for Mg(2+). Position 451 (lysine 451) interacts with (6S)-5-formyl-5,6,7,8-tetrahydrofolate.

Belongs to the TRAFAC class TrmE-Era-EngA-EngB-Septin-like GTPase superfamily. TrmE GTPase family. Homodimer. Heterotetramer of two MnmE and two MnmG subunits. Requires K(+) as cofactor.

It localises to the cytoplasm. Its function is as follows. Exhibits a very high intrinsic GTPase hydrolysis rate. Involved in the addition of a carboxymethylaminomethyl (cmnm) group at the wobble position (U34) of certain tRNAs, forming tRNA-cmnm(5)s(2)U34. In Synechococcus sp. (strain CC9902), this protein is tRNA modification GTPase MnmE.